A 170-amino-acid polypeptide reads, in one-letter code: Mitotic-spindle organizing protein 2B (170 aa).

Disordered stretches follow at residues 1–26 (MSRG…SPDA) and 102–170 (SADS…GSST). A compositionally biased stretch (low complexity) spans 8–20 (GSQAMASSQAAGP). A compositionally biased stretch (polar residues) spans 123–132 (PNPTTSTTQG). Low complexity predominate over residues 151–170 (SGSRMQKSSSSGKSSGGSST).

Belongs to the MOZART2 family. As to quaternary structure, part of the gamma-tubulin complex. Interacts with TUBG1.

The protein localises to the cytoplasm. The protein resides in the cytoskeleton. Its subcellular location is the microtubule organizing center. It localises to the centrosome. It is found in the spindle. The sequence is that of Mitotic-spindle organizing protein 2B (mzt2b) from Xenopus tropicalis (Western clawed frog).